We begin with the raw amino-acid sequence, 217 residues long: Vesicle transport through interaction with t-SNAREs homolog 1A (217 aa).

At 1–192 (MDVFERTEQN…TGIARRLATN (192 aa)) the chain is on the cytoplasmic side. The stretch at 36-97 (AVREVENDID…AQLQSSNQTN (62 aa)) forms a coiled coil. Residues 90 to 109 (LQSSNQTNSNPWSNAPDDYQ) form a disordered region. A t-SNARE coiled-coil homology domain is found at 123 to 185 (SNMLDSTSDR…KSARKIMTGI (63 aa)). Residues 193 to 213 (KVILSIIILLLMGIIALIICL) form a helical; Anchor for type IV membrane protein membrane-spanning segment. Residues 214-217 (KWLR) lie on the Vesicular side of the membrane.

It belongs to the VTI1 family. Component of the SNARE complex composed of syn7A, syn8A, vamp7A and vti1A.

The protein resides in the membrane. Its subcellular location is the cytoplasmic vesicle. It is found in the secretory vesicle membrane. The protein localises to the clathrin-coated vesicle membrane. It localises to the endosome membrane. The protein resides in the endoplasmic reticulum membrane. V-SNARE that mediates vesicle transport pathways through interactions with t-SNAREs on the target membrane. These interactions are proposed to mediate aspects of the specificity of vesicle trafficking and to promote fusion of the lipid bilayers. This chain is Vesicle transport through interaction with t-SNAREs homolog 1A, found in Dictyostelium discoideum (Social amoeba).